The chain runs to 1729 residues: RNA-directed RNA polymerase (1729 aa).

The 174-residue stretch at 59-232 (HPMSLAVHPH…FHEPWQLYWL (174 aa)) folds into the Alphavirus-like MT domain. Disordered regions lie at residues 528 to 619 (NSNA…TPSP) and 635 to 663 (STSR…TLGR). Polar residues-rich tracts occupy residues 538–567 (QQDQ…TNSV) and 586–617 (FPTT…SVTP). The span at 635–652 (STSRASSPSPRRTVVSPR) shows a compositional bias: low complexity. Residues 741–834 (SYDHCLIQRY…RVSITFRNKT (94 aa)) form the Fe2OG dioxygenase domain. Fe cation-binding residues include His-759, Asp-761, and His-816. Arg-825 is a binding site for 2-oxoglutarate. The interval 841-862 (SAPDMNPVEQPGASAGQLTGPL) is disordered. The region spanning 957-1111 (LQNADLTWKT…VFKQYCGYYI (155 aa)) is the (+)RNA virus helicase ATP-binding domain. Positions 1112 to 1247 (NCTHRNKQDL…VITERAAAET (136 aa)) constitute a (+)RNA virus helicase C-terminal domain. The 108-residue stretch at 1492-1599 (RPAFASDFEA…DQVPVEKTGF (108 aa)) folds into the RdRp catalytic domain.

It belongs to the potexvirus/carlavirus RNA replication protein family. The cofactor is Fe(2+).

The catalysed reaction is RNA(n) + a ribonucleoside 5'-triphosphate = RNA(n+1) + diphosphate. It carries out the reaction ATP + H2O = ADP + phosphate + H(+). Its function is as follows. RNA replication. The central part of this protein possibly functions as an ATP-binding helicase. This chain is RNA-directed RNA polymerase (ORF1), found in Lolium latent virus (isolate Lolium/USA/US1/-) (LoLV).